The chain runs to 264 residues: Thymidylate synthase (264 aa).

Residues arginine 21 and 126–127 (RR) contribute to the dUMP site. The Nucleophile role is filled by cysteine 146. DUMP contacts are provided by residues 166–169 (RSAD), asparagine 177, and 207–209 (HLY). Aspartate 169 contributes to the (6R)-5,10-methylene-5,6,7,8-tetrahydrofolate binding site. A (6R)-5,10-methylene-5,6,7,8-tetrahydrofolate-binding site is contributed by alanine 263.

This sequence belongs to the thymidylate synthase family. Bacterial-type ThyA subfamily. Homodimer.

The protein resides in the cytoplasm. It carries out the reaction dUMP + (6R)-5,10-methylene-5,6,7,8-tetrahydrofolate = 7,8-dihydrofolate + dTMP. It functions in the pathway pyrimidine metabolism; dTTP biosynthesis. Functionally, catalyzes the reductive methylation of 2'-deoxyuridine-5'-monophosphate (dUMP) to 2'-deoxythymidine-5'-monophosphate (dTMP) while utilizing 5,10-methylenetetrahydrofolate (mTHF) as the methyl donor and reductant in the reaction, yielding dihydrofolate (DHF) as a by-product. This enzymatic reaction provides an intracellular de novo source of dTMP, an essential precursor for DNA biosynthesis. This chain is Thymidylate synthase, found in Halorhodospira halophila (strain DSM 244 / SL1) (Ectothiorhodospira halophila (strain DSM 244 / SL1)).